Reading from the N-terminus, the 86-residue chain is Acyl carrier protein (86 aa).

The 76-residue stretch at 10 to 85 (DKIEQKVIEM…DVIQYIKERQ (76 aa)) folds into the Carrier domain. O-(pantetheine 4'-phosphoryl)serine is present on Ser-45.

The protein belongs to the acyl carrier protein (ACP) family. 4'-phosphopantetheine is transferred from CoA to a specific serine of apo-ACP by AcpS. This modification is essential for activity because fatty acids are bound in thioester linkage to the sulfhydryl of the prosthetic group.

It is found in the cytoplasm. The protein operates within lipid metabolism; fatty acid biosynthesis. Carrier of the growing fatty acid chain in fatty acid biosynthesis. This is Acyl carrier protein from Rickettsia canadensis (strain McKiel).